The primary structure comprises 1709 residues: Hybrid signal transduction histidine kinase L (1709 aa).

Disordered regions lie at residues 52 to 192 (SNNN…SPPH), 206 to 276 (FFSG…NSSD), 413 to 535 (TSNS…NNSC), and 554 to 615 (QQQQ…IFNN). The segment covering 53–87 (NNNNNNNNNNNNNNNNNNNNNNNNNNNNNNNNNNN) has biased composition (low complexity). Positions 88–100 (NEEKSNNETEKTL) are enriched in basic and acidic residues. Low complexity predominate over residues 106-148 (TTTTTTTNNNNNNNNNNNNNNNNNNNNNNNNNNNNNNNNNNTN). A compositionally biased stretch (polar residues) spans 149–170 (SSNDIYMNSPSSTLSSPGNAGN). Composition is skewed to low complexity over residues 413–466 (TSNS…TPNS), 486–535 (NNSP…NNSC), and 554–576 (QQQQ…PTTS). The span at 585 to 610 (LTINTSFKTSPMSSPKSFNKPSQSPQ) shows a compositional bias: polar residues. The 72-residue stretch at 700-771 (ATRKMVTCIE…ATLTDKKTWN (72 aa)) folds into the PAS domain. In terms of domain architecture, PAC spans 770 to 822 (WNGFIRTRHNNNTLIYFEASISPVLDQFQQILYYNCTKRDVTQKRIDEESKTL). The Histidine kinase domain maps to 837 to 1059 (MMSHDIRTPM…TFTCILKFKK (223 aa)). H840 is modified (phosphohistidine; by autocatalysis). 2 disordered regions span residues 1068-1112 (LLPA…HQQH) and 1137-1298 (QHQL…PTSP). 3 stretches are compositionally biased toward low complexity: residues 1075-1112 (LQQQ…HQQH), 1137-1153 (QHQL…LQQQ), and 1176-1194 (NQHI…QQQQ). Residues 1204-1221 (HNSHGHNHHGSHHNHNHQ) are compositionally biased toward basic residues. Composition is skewed to polar residues over residues 1244-1257 (NEQQ…NSFS) and 1275-1298 (NISQ…PTSP). 2 Response regulatory domains span residues 1312–1492 (KMLF…MMYL) and 1570–1692 (KVLV…KKYG). D1366 carries the 4-aspartylphosphate modification. Low complexity-rich tracts occupy residues 1390 to 1412 (QHLQ…SELQ) and 1420 to 1440 (KNSS…SSGG). The disordered stretch occupies residues 1390 to 1440 (QHLQQQQEQEQQQQQEQQQSELQKQPDVENKNSSQNNDNNNNNNKSNSSGG). D1622 is subject to 4-aspartylphosphate.

In terms of processing, activation probably requires transfer of a phosphate group between a histidine in the kinase core (transmitter) domain and an aspartate of the receiver domain.

It catalyses the reaction ATP + protein L-histidine = ADP + protein N-phospho-L-histidine.. Its function is as follows. Acts as a receptor histidine kinase for a signal transduction pathway. This protein undergoes an ATP-dependent autophosphorylation at a conserved histidine residue in the kinase core, and a phosphoryl group is then transferred to a conserved aspartate residue in the receiver domain. In Dictyostelium discoideum (Social amoeba), this protein is Hybrid signal transduction histidine kinase L (dhkL).